We begin with the raw amino-acid sequence, 197 residues long: HTH-type transcriptional regulator BetI (197 aa).

The HTH tetR-type domain maps to 8–68 (PIRRQQLIEA…ATMGYIMSML (61 aa)). Residues 31 to 50 (SIALIARLAGVSNGIISHYF) constitute a DNA-binding region (H-T-H motif).

It functions in the pathway amine and polyamine biosynthesis; betaine biosynthesis via choline pathway [regulation]. Functionally, repressor involved in the biosynthesis of the osmoprotectant glycine betaine. It represses transcription of the choline transporter BetT and the genes of BetAB involved in the synthesis of glycine betaine. The protein is HTH-type transcriptional regulator BetI of Pseudomonas fluorescens (strain ATCC BAA-477 / NRRL B-23932 / Pf-5).